The sequence spans 192 residues: Xanthine phosphoribosyltransferase (192 aa).

Leu-20 and Asn-27 together coordinate xanthine. 128–132 (ANGQA) lines the 5-phospho-alpha-D-ribose 1-diphosphate pocket. Lys-156 is a binding site for xanthine.

This sequence belongs to the purine/pyrimidine phosphoribosyltransferase family. Xpt subfamily. As to quaternary structure, homodimer.

The protein resides in the cytoplasm. The enzyme catalyses XMP + diphosphate = xanthine + 5-phospho-alpha-D-ribose 1-diphosphate. It participates in purine metabolism; XMP biosynthesis via salvage pathway; XMP from xanthine: step 1/1. Functionally, converts the preformed base xanthine, a product of nucleic acid breakdown, to xanthosine 5'-monophosphate (XMP), so it can be reused for RNA or DNA synthesis. The polypeptide is Xanthine phosphoribosyltransferase (Ligilactobacillus salivarius (strain UCC118) (Lactobacillus salivarius)).